Reading from the N-terminus, the 188-residue chain is Adenylate kinase (188 aa).

G12 to T17 lines the ATP pocket. Residues S32–V61 form an NMP region. AMP-binding positions include T33, R38, N59 to V61, G89 to R92, and Q96. Positions G130–D136 are LID. R131 provides a ligand contact to ATP. Residues R133 and R144 each contribute to the AMP site. An ATP-binding site is contributed by G172.

This sequence belongs to the adenylate kinase family. As to quaternary structure, monomer.

It is found in the cytoplasm. The enzyme catalyses AMP + ATP = 2 ADP. It participates in purine metabolism; AMP biosynthesis via salvage pathway; AMP from ADP: step 1/1. Functionally, catalyzes the reversible transfer of the terminal phosphate group between ATP and AMP. Plays an important role in cellular energy homeostasis and in adenine nucleotide metabolism. This Oenococcus oeni (strain ATCC BAA-331 / PSU-1) protein is Adenylate kinase.